We begin with the raw amino-acid sequence, 537 residues long: MAPLSKALSVFMLMGITYAFNYDQPYRGQYHFSPQKNWMNDPNGLLYHNGTYHLFFQYNPGGIEWGNISWGHAISEDLTHWEEKPVALLARGFGSDVTEMYFSGSAVADVNNTSGFGKDGKTPLVAMYTSYYPVAQTLPSGQTVQEDQQSQSIAYSLDDGLTWTTYDAANPVIPNPPSPYEAEYQNFRDPFVFWHDESQKWVVVTSIAELHKLAIYTSDNLKDWKLVSEFGPYNAQGGVWECPGLVKLPLDSGNSTKWVITSGLNPGGPPGTVGSGTQYFVGEFDGTTFTPDADTVYPGNSTANWMDWGPDFYAAAGYNGLSLNDHVHIGWMNNWQYGANIPTYPWRSAMAIPRHMALKTIGSKATLVQQPQEAWSSISNKRPIYSRTFKTLSEGSTNTTTTGETFKVDLSFSAKSKASTFAIALRASANFTEQTLVGYDFAKQQIFLDRTHSGDVSFDETFASVYHGPLTPDSTGVVKLSIFVDRSSVEVFGGQGETTLTAQIFPSSDAVHARLASTGGTTEDVRADIYKIASTWN.

Positions 1 to 19 (MAPLSKALSVFMLMGITYA) are cleaved as a signal peptide. Beta-D-fructose is bound by residues Asn-40 and Asp-41. Asp-41 acts as the Nucleophile in catalysis. Asn-49 carries an N-linked (GlcNAc...) asparagine glycan. Residues Gln-57 and Trp-65 each coordinate beta-D-fructose. N-linked (GlcNAc...) asparagine glycosylation occurs at Asn-67. Ser-103 is a binding site for beta-D-fructose. Asn-111 and Asn-112 each carry an N-linked (GlcNAc...) asparagine glycan. Residues Arg-188, Asp-189, and Glu-241 each coordinate beta-D-fructose. The active-site Proton donor/acceptor is the Glu-241. 2 N-linked (GlcNAc...) asparagine glycosylation sites follow: Asn-254 and Asn-300. Trp-335 contacts beta-D-fructose. N-linked (GlcNAc...) asparagine glycans are attached at residues Asn-398 and Asn-430.

It belongs to the glycosyl hydrolase 32 family.

The protein localises to the secreted. It carries out the reaction Hydrolysis of terminal, non-reducing (2-&gt;1)- and (2-&gt;6)-linked beta-D-fructofuranose residues in fructans.. In terms of biological role, exo-inulinase involved in utilization of the plant storage polymer inulin, consisting of fructooligosaccharides with a degree of polymerization (DP) value from 2 to 60. Splits off terminal fructose units successively from the non-reducing end of the inulin molecule, and also hydrolyzes levan, stachyose and raffinose. Hydrolyzes both beta-2,1- as well as beta-2,6-fructosyl linkages in fructooligosaccharides. The chain is Extracellular exo-inulinase from Aspergillus awamori (Black koji mold).